The following is a 287-amino-acid chain: tRNA pseudouridine synthase B (287 aa).

Aspartate 38 serves as the catalytic Nucleophile.

Belongs to the pseudouridine synthase TruB family. Type 1 subfamily.

The catalysed reaction is uridine(55) in tRNA = pseudouridine(55) in tRNA. Functionally, responsible for synthesis of pseudouridine from uracil-55 in the psi GC loop of transfer RNAs. The sequence is that of tRNA pseudouridine synthase B from Fusobacterium nucleatum subsp. nucleatum (strain ATCC 25586 / DSM 15643 / BCRC 10681 / CIP 101130 / JCM 8532 / KCTC 2640 / LMG 13131 / VPI 4355).